The primary structure comprises 91 residues: Acylphosphatase (91 aa).

One can recognise an Acylphosphatase-like domain in the interval Gln-3–Tyr-90. Catalysis depends on residues Arg-18 and Asn-36.

Belongs to the acylphosphatase family.

The enzyme catalyses an acyl phosphate + H2O = a carboxylate + phosphate + H(+). This Bacillus subtilis (strain 168) protein is Acylphosphatase (acyP).